The primary structure comprises 205 residues: uncharacterized protein (205 aa).

This is an uncharacterized protein from Bacillus subtilis (strain 168).